The chain runs to 387 residues: UPF0400 protein C337.03 (387 aa).

The region spanning 1–133 (MALTPDTVSS…SLQERFNNAE (133 aa)) is the CID domain. Residues 177-255 (KSYLEKQSDY…IISNLENKES (79 aa)) adopt a coiled-coil conformation. The disordered stretch occupies residues 257-387 (TATSTLTDAG…SSAAGLYGDS (131 aa)). Residues 283–297 (SPPSSSPNSDDAYSP) show a composition bias toward low complexity. Over residues 298-323 (QVDSYSPSINSVPYTSNIVENPSEDN) the composition is skewed to polar residues. A compositionally biased stretch (acidic residues) spans 353 to 365 (NEEESKELPEDSD). Over residues 370–379 (DSSPSSDDSS) the composition is skewed to low complexity. Ser-372 is subject to Phosphoserine.

Belongs to the UPF0400 (RTT103) family.

This chain is UPF0400 protein C337.03, found in Schizosaccharomyces pombe (strain 972 / ATCC 24843) (Fission yeast).